We begin with the raw amino-acid sequence, 877 residues long: G-protein coupled receptor family C group 6 member A (877 aa).

An N-terminal signal peptide occupies residues 1 to 24 (MAGLDLSLVLMLSVLAGVREVSLT). Residues 25–567 (QVNQQGVIAP…EYFEWNSGFA (543 aa)) are Extracellular-facing. N-linked (GlcNAc...) asparagine glycosylation is found at N53, N99, N135, N263, N310, N322, N338, and N358. D388 is an L-lysine binding site. N-linked (GlcNAc...) asparagine glycosylation is found at N430, N475, N484, N528, and N548. A helical membrane pass occupies residues 568 to 588 (IALLTLAALGILLLISMSALF). At 589-603 (FWQRNSLVVKAAGGP) the chain is on the cytoplasmic side. Residues 604–624 (LCHLILFSLLGSFISVIFFVG) form a helical membrane-spanning segment. Topologically, residues 625 to 635 (EPSNESCRVRQ) are extracellular. N-linked (GlcNAc...) asparagine glycosylation is present at N628. The chain crosses the membrane as a helical span at residues 636 to 656 (VIFGLSFTLCVSCILVKSLKI). The Cytoplasmic portion of the chain corresponds to 657 to 676 (LLAFQMNLELKELLRKLYKP). The helical transmembrane segment at 677-697 (YVIVCMCMGLQVTICTLWLTL) threads the bilayer. The Extracellular portion of the chain corresponds to 698 to 720 (HRPFIEKVVQPKSILLECNEGSD). The chain crosses the membrane as a helical span at residues 721-741 (LMFGLMLGYIVLLALICFTFA). The Cytoplasmic portion of the chain corresponds to 742–755 (YKGRKLPQKYNEAK). Residues 756 to 776 (FITFGMLIYLMAWVIFIPVHV) form a helical membrane-spanning segment. Residues 777–782 (TTSGKY) lie on the Extracellular side of the membrane. A helical membrane pass occupies residues 783-803 (VPAVEVVVILISNYGILSCHF). At 804-877 (LPKCYIIIFK…VSVPEIDNVL (74 aa)) the chain is on the cytoplasmic side.

This sequence belongs to the G-protein coupled receptor 3 family. As to quaternary structure, homodimer; disulfide-linked. Expressed in olfactory epithelium. Also expressed in gills, tongue, lips and palatal organ. Not expressed in brain, kidney, liver, muscle, intestine, ovary and skin. In olfactory epithelium, it is widely expressed over the apical and medial portions of the olfactory sensory neurons, regions that contain olfactory neurons. Expressed in external epithelia, which contains taste buds and solitary chemosensory cells. On gill rakers, it is widely expressed in the surface epithelium, but excluded from taste buds.

It is found in the cell membrane. Functionally, olfactory receptor that is activated by amino acids that act as potent odorants in fish. Most highly activated by basic amino acids such as L-lysine and L-arginine. This chain is G-protein coupled receptor family C group 6 member A (gprc6a), found in Carassius auratus (Goldfish).